The primary structure comprises 140 residues: MSPTLTHLALHVPDLDACIAFYETFCGMRVIHRRPGKGSQIVWMAEPGQEQRFIFVIMPGGQPRNLASDDYSHFGFALSSRAAVDDLARRAEAAGCLVWAPRDEPYPVGYYCGLRDPAGNYVEFSYGQPLGPGSEALPIP.

A VOC domain is found at T4 to G127.

This is an uncharacterized protein from Pseudomonas aeruginosa (strain ATCC 15692 / DSM 22644 / CIP 104116 / JCM 14847 / LMG 12228 / 1C / PRS 101 / PAO1).